Reading from the N-terminus, the 183-residue chain is Endoribonuclease YbeY (183 aa).

Zn(2+)-binding residues include histidine 143, histidine 147, and histidine 153.

It belongs to the endoribonuclease YbeY family. The cofactor is Zn(2+).

Its subcellular location is the cytoplasm. Its function is as follows. Single strand-specific metallo-endoribonuclease involved in late-stage 70S ribosome quality control and in maturation of the 3' terminus of the 16S rRNA. In Rickettsia bellii (strain RML369-C), this protein is Endoribonuclease YbeY.